The chain runs to 144 residues: D-aminoacyl-tRNA deacylase (144 aa).

The Gly-cisPro motif, important for rejection of L-amino acids motif lies at 136-137 (GP).

This sequence belongs to the DTD family. Homodimer.

The protein resides in the cytoplasm. It catalyses the reaction glycyl-tRNA(Ala) + H2O = tRNA(Ala) + glycine + H(+). The catalysed reaction is a D-aminoacyl-tRNA + H2O = a tRNA + a D-alpha-amino acid + H(+). In terms of biological role, an aminoacyl-tRNA editing enzyme that deacylates mischarged D-aminoacyl-tRNAs. Also deacylates mischarged glycyl-tRNA(Ala), protecting cells against glycine mischarging by AlaRS. Acts via tRNA-based rather than protein-based catalysis; rejects L-amino acids rather than detecting D-amino acids in the active site. By recycling D-aminoacyl-tRNA to D-amino acids and free tRNA molecules, this enzyme counteracts the toxicity associated with the formation of D-aminoacyl-tRNA entities in vivo and helps enforce protein L-homochirality. The polypeptide is D-aminoacyl-tRNA deacylase (Aliivibrio fischeri (strain MJ11) (Vibrio fischeri)).